We begin with the raw amino-acid sequence, 78 residues long: Teretoxin Tsu6.15 (78 aa).

A signal peptide spans 1-21 (MATSGRLLCFCLVLGLVFESL). The propeptide occupies 22–47 (GYSEARPPRDRKRTVTAKRYDPLAQR).

It belongs to the teretoxin M (TM) superfamily. In terms of processing, contains 3 disulfide bonds. Expressed by the venom duct.

The protein resides in the secreted. The protein is Teretoxin Tsu6.15 of Terebra subulata (Chocolate spotted auger).